Consider the following 117-residue polypeptide: Immunoglobulin heavy variable 1-3 (117 aa).

The N-terminal stretch at M1–S19 is a signal peptide. Residues Q20–S44 form a framework-1 region. The region spanning Q20–R117 is the Ig-like domain. An intrachain disulfide couples C41 to C115. The segment at G45–A52 is complementarity-determining-1. The tract at residues M53 to W69 is framework-2. The tract at residues I70–T77 is complementarity-determining-2. The interval K78–C115 is framework-3. Residues A116–R117 are complementarity-determining-3.

Immunoglobulins are composed of two identical heavy chains and two identical light chains; disulfide-linked.

It is found in the secreted. It localises to the cell membrane. V region of the variable domain of immunoglobulin heavy chains that participates in the antigen recognition. Immunoglobulins, also known as antibodies, are membrane-bound or secreted glycoproteins produced by B lymphocytes. In the recognition phase of humoral immunity, the membrane-bound immunoglobulins serve as receptors which, upon binding of a specific antigen, trigger the clonal expansion and differentiation of B lymphocytes into immunoglobulins-secreting plasma cells. Secreted immunoglobulins mediate the effector phase of humoral immunity, which results in the elimination of bound antigens. The antigen binding site is formed by the variable domain of one heavy chain, together with that of its associated light chain. Thus, each immunoglobulin has two antigen binding sites with remarkable affinity for a particular antigen. The variable domains are assembled by a process called V-(D)-J rearrangement and can then be subjected to somatic hypermutations which, after exposure to antigen and selection, allow affinity maturation for a particular antigen. This chain is Immunoglobulin heavy variable 1-3, found in Homo sapiens (Human).